The sequence spans 174 residues: ATP synthase subunit d, mitochondrial (174 aa).

N-acetylserine is present on S2.

It belongs to the ATPase d subunit family. F-type ATPases have 2 components, CF(1) - the catalytic core - and CF(0) - the membrane proton channel. In yeast, the dimeric form of ATP synthase consists of 17 polypeptides: alpha, beta, gamma, delta, epsilon, 4 (B), 5 (OSCP), 6 (A), 8, 9 (C), d, E (Tim11), f, g, h, i/j and k.

It is found in the mitochondrion. It localises to the mitochondrion inner membrane. Mitochondrial membrane ATP synthase (F(1)F(0) ATP synthase or Complex V) produces ATP from ADP in the presence of a proton gradient across the membrane which is generated by electron transport complexes of the respiratory chain. F-type ATPases consist of two structural domains, F(1) - containing the extramembraneous catalytic core, and F(0) - containing the membrane proton channel, linked together by a central stalk and a peripheral stalk. During catalysis, ATP synthesis in the catalytic domain of F(1) is coupled via a rotary mechanism of the central stalk subunits to proton translocation. Part of the complex F(0) domain and the peripheric stalk, which acts as a stator to hold the catalytic alpha(3)beta(3) subcomplex and subunit a/ATP6 static relative to the rotary elements. This Saccharomyces cerevisiae (strain ATCC 204508 / S288c) (Baker's yeast) protein is ATP synthase subunit d, mitochondrial (ATP7).